Here is an 87-residue protein sequence, read N- to C-terminus: Beta-mammal toxin Css4 (87 aa).

A signal peptide spans Met-1–Ala-19. Residues Lys-20–Asn-85 enclose the LCN-type CS-alpha/beta domain. Cystine bridges form between Cys-31-Cys-84, Cys-35-Cys-60, Cys-44-Cys-65, and Cys-48-Cys-67. Residue Asn-85 is modified to Asparagine amide.

It belongs to the long (4 C-C) scorpion toxin superfamily. Sodium channel inhibitor family. Beta subfamily. In terms of tissue distribution, expressed by the venom gland.

Its subcellular location is the secreted. Its function is as follows. Beta toxins bind voltage-independently at site-4 of sodium channels (Nav) and shift the voltage of activation toward more negative potentials thereby affecting sodium channel activation and promoting spontaneous and repetitive firing. This toxin is active only on mammals. The polypeptide is Beta-mammal toxin Css4 (Centruroides suffusus (Durango bark scorpion)).